Reading from the N-terminus, the 235-residue chain is Deoxyribose-phosphate aldolase (235 aa).

Residue aspartate 107 is the Proton donor/acceptor of the active site. Lysine 167 functions as the Schiff-base intermediate with acetaldehyde in the catalytic mechanism. Lysine 197 functions as the Proton donor/acceptor in the catalytic mechanism.

The protein belongs to the DeoC/FbaB aldolase family. DeoC type 1 subfamily. As to quaternary structure, homotetramer.

The protein localises to the cytoplasm. It catalyses the reaction 2-deoxy-D-ribose 5-phosphate = D-glyceraldehyde 3-phosphate + acetaldehyde. It functions in the pathway carbohydrate degradation; 2-deoxy-D-ribose 1-phosphate degradation; D-glyceraldehyde 3-phosphate and acetaldehyde from 2-deoxy-alpha-D-ribose 1-phosphate: step 2/2. Catalyzes a reversible aldol reaction between acetaldehyde and D-glyceraldehyde 3-phosphate to generate 2-deoxy-D-ribose 5-phosphate. This chain is Deoxyribose-phosphate aldolase, found in Aeropyrum pernix (strain ATCC 700893 / DSM 11879 / JCM 9820 / NBRC 100138 / K1).